The sequence spans 533 residues: Beta-xylosidase (533 aa).

Residue Asp-14 is the Proton acceptor of the active site. Glu-186 (proton donor) is an active-site residue.

It belongs to the glycosyl hydrolase 43 family. Homodimer.

The protein localises to the cell membrane. It catalyses the reaction Hydrolysis of (1-&gt;4)-beta-D-xylans, to remove successive D-xylose residues from the non-reducing termini.. The polypeptide is Beta-xylosidase (xynB) (Bacillus subtilis (strain 168)).